An 84-amino-acid chain; its full sequence is U8-theraphotoxin-Hhn1a (84 aa).

The N-terminal stretch at 1 to 21 (MKVVLLECLVWMMAMMELVSC) is a signal peptide. Disulfide bonds link cysteine 23-cysteine 35, cysteine 29-cysteine 44, cysteine 34-cysteine 67, cysteine 54-cysteine 75, and cysteine 69-cysteine 81.

It belongs to the AVIT (prokineticin) family. In terms of tissue distribution, expressed by the venom gland.

It is found in the secreted. The polypeptide is U8-theraphotoxin-Hhn1a (Cyriopagopus hainanus (Chinese bird spider)).